We begin with the raw amino-acid sequence, 478 residues long: Quinoprotein glucose dehydrogenase B (478 aa).

Positions 1-24 (MNKHLLAKIALLSAVQLVTLSAFA) are cleaved as a signal peptide. D-glucose contacts are provided by glutamine 100 and aspartate 167. Histidine 168 (proton acceptor) is an active-site residue. Positions 192 and 252 each coordinate D-glucose. The PQQ stretch occupies residues 252–253 (RN). Ca(2+)-binding residues include glycine 271, proline 272, glutamate 277, tyrosine 287, alanine 293, tyrosine 295, aspartate 297, and glutamate 333. Residues tyrosine 367, threonine 372, and lysine 401 each coordinate pyrroloquinoline quinone. Residues 430–432 (RYR) are PQQ.

Belongs to the PQQ oxidoreductase GdhB family. Homodimer. It depends on pyrroloquinoline quinone as a cofactor. Ca(2+) is required as a cofactor.

The enzyme catalyses a ubiquinone + D-glucose = D-glucono-1,5-lactone + a ubiquinol. In terms of biological role, oxidizes glucose to gluconolactone. This is Quinoprotein glucose dehydrogenase B (gdhB) from Acinetobacter calcoaceticus.